We begin with the raw amino-acid sequence, 149 residues long: ATP synthase epsilon chain (149 aa).

Composition is skewed to basic and acidic residues over residues 99 to 116 (DVER…RLEE) and 123 to 134 (RETHEAARDRAR). The interval 99 to 149 (DVERAESAEERAKRRLEEGVQEEERETHEAARDRARNRLRVAMGKVGTRQS) is disordered.

The protein belongs to the ATPase epsilon chain family. As to quaternary structure, F-type ATPases have 2 components, CF(1) - the catalytic core - and CF(0) - the membrane proton channel. CF(1) has five subunits: alpha(3), beta(3), gamma(1), delta(1), epsilon(1). CF(0) has three main subunits: a, b and c.

Its subcellular location is the cell inner membrane. Produces ATP from ADP in the presence of a proton gradient across the membrane. The protein is ATP synthase epsilon chain of Salinibacter ruber (strain DSM 13855 / M31).